The chain runs to 298 residues: Glutamyl-Q tRNA(Asp) synthetase (298 aa).

L-glutamate is bound by residues 8-12 (RFAPS) and glutamate 44. Residues 11-21 (PSPTGPLHFGS) carry the 'HIGH' region motif. Residues cysteine 100, cysteine 102, tyrosine 123, and cysteine 127 each coordinate Zn(2+). Residues tyrosine 183 and arginine 201 each coordinate L-glutamate. Residues 239-243 (KLSKQ) carry the 'KMSKS' region motif. Lysine 242 serves as a coordination point for ATP.

It belongs to the class-I aminoacyl-tRNA synthetase family. GluQ subfamily. It depends on Zn(2+) as a cofactor.

Its function is as follows. Catalyzes the tRNA-independent activation of glutamate in presence of ATP and the subsequent transfer of glutamate onto a tRNA(Asp). Glutamate is transferred on the 2-amino-5-(4,5-dihydroxy-2-cyclopenten-1-yl) moiety of the queuosine in the wobble position of the QUC anticodon. The polypeptide is Glutamyl-Q tRNA(Asp) synthetase (Burkholderia orbicola (strain AU 1054)).